The chain runs to 246 residues: Probable transcriptional regulatory protein HS_0508 (246 aa).

The protein belongs to the TACO1 family.

The protein localises to the cytoplasm. This is Probable transcriptional regulatory protein HS_0508 from Histophilus somni (strain 129Pt) (Haemophilus somnus).